The chain runs to 618 residues: Cell pattern formation-associated protein STU1 (618 aa).

Residues 13-28 (MSAGPTQQPPTVTSYN) are compositionally biased toward polar residues. The tract at residues 13–105 (MSAGPTQQPP…FDTSGQIAPP (93 aa)) is disordered. Residues 48-59 (YGGYPYTNGMPS) show a composition bias toward low complexity. A compositionally biased stretch (polar residues) spans 91–101 (NQYSGFDTSGQ). One can recognise an HTH APSES-type domain in the interval 110-216 (RVTATLWEDE…HNISALLYHP (107 aa)). The H-T-H motif DNA-binding region spans 144–165 (GTKLLNVAGMTRGRRDGILKSE). Disordered stretches follow at residues 229 to 355 (AERR…YDGS) and 390 to 618 (SEMG…SRRR). Composition is skewed to polar residues over residues 256–266 (MSQNGSQSLSG), 284–298 (TSAS…SDSF), 305–326 (AMSN…TRSM), and 336–355 (GSTL…YDGS). A compositionally biased stretch (basic and acidic residues) spans 438-451 (DHEHDPEYTHDSRT). The span at 452–476 (YDNSQSQYNYTAPPVSSISSEQAHV) shows a compositional bias: polar residues. Residues 494 to 512 (PRSAAAPQAYYQQAYSTSP) are compositionally biased toward low complexity. Residues 513–563 (RSATHQSTSNLYNVMSNDRGSTTNGSANGDVYSQSTDLSNGYATPVTNGNA) show a composition bias toward polar residues. Residues 566–588 (KRGRDDDDDRSSSSGQMDLKRRK) form a nuclear localization domain region.

It belongs to the EFG1/PHD1/stuA family.

It localises to the nucleus. Functionally, transcription factor that regulates asexual reproduction. Binds the StuA-response elements (StRE) with the consensus sequence 5'-(A/T)CGCG(T/A)N(A/C)-3' at the promoters of target genes. Required for appressorium-mediated infection of rice leaves due to its involvement in the mobilization of lipids and glycogen. This chain is Cell pattern formation-associated protein STU1, found in Pyricularia oryzae (strain 70-15 / ATCC MYA-4617 / FGSC 8958) (Rice blast fungus).